Consider the following 360-residue polypeptide: MAKSPETEHPNKVFGWGARDKSGVLSPFHFSRRDNGENDVTVKILFCGVCHTDLHTIKNDWGYSYYPVVPGHEIVGIATKVGKNVTKFKEGDRVGVGVISGSCQSCESCDQDLENYCPQMSFTYNAIGSDGTKNYGGYSENIVVDQRFVLRFPENLPSDSGAPLLCAGITVYSPMKYYGMTEAGKHLGVAGLGGLGHVAVKIGKAFGLKVTVISSSSTKAEEAINHLGADSFLVTTDPQKMKAAIGTMDYIIDTISAVHALYPLLGLLKVNGKLIALGLPEKPLELPMFPLVLGRKMVGGSDVGGMKETQEMLDFCAKHNITADIELIKMDEINTAMERLAKSDVRYRFVIDVANSLSPP.

Cysteine 50 contacts Zn(2+). Residue threonine 52 participates in NADP(+) binding. Zn(2+)-binding residues include histidine 72, glutamate 73, cysteine 103, cysteine 106, cysteine 109, cysteine 117, and cysteine 166. Residues threonine 170, 191 to 196 (GLGGLG), 214 to 219 (SSSSTK), threonine 254, glycine 278, and 301 to 303 (SDV) contribute to the NADP(+) site.

Belongs to the zinc-containing alcohol dehydrogenase family. Homodimer. Requires Zn(2+) as cofactor. As to expression, expressed in the vasculature of the primary root and elongation regions. Expressed in the hypocotyl, cotyledon veins, vasculature of the first rosette leaves, and hydathodes. In stems, expressed in the vascular cambium, interfascicular cambium, developing xylem, and phloem. Expressed in the entire floral organs at late developing stage, and in the abscission, style and stigmatic regions of siliques and seed funicules.

The catalysed reaction is (E)-cinnamyl alcohol + NADP(+) = (E)-cinnamaldehyde + NADPH + H(+). It functions in the pathway aromatic compound metabolism; phenylpropanoid biosynthesis. Its function is as follows. Involved in lignin biosynthesis. May catalyze the final step specific for the production of lignin monomers, like coniferyl alcohol, sinapyl alcohol and 4-coumaryl alcohol. This Arabidopsis thaliana (Mouse-ear cress) protein is Probable cinnamyl alcohol dehydrogenase 9 (CAD9).